Reading from the N-terminus, the 341-residue chain is Solute carrier family 25 member 43 (341 aa).

Solcar repeat units lie at residues 11–101 (TGSQ…MDDL), 105–185 (SQWS…LLVY), and 200–298 (SHLQ…LYQN). 6 helical membrane passes run 16–36 (LLCA…LELA), 68–88 (LWKG…VQLA), 110–130 (IVTG…TDLI), 166–186 (GVSL…LVYM), 205–225 (FANV…FDTV), and 262–282 (VLGL…YFGV).

It belongs to the mitochondrial carrier (TC 2.A.29) family.

The protein resides in the mitochondrion inner membrane. The polypeptide is Solute carrier family 25 member 43 (Slc25a43) (Mus musculus (Mouse)).